The sequence spans 251 residues: Spermatogenesis-associated protein 46 (251 aa).

It is found in the nucleus membrane. In terms of biological role, plays a role in spermiogenesis and fertilization. The sequence is that of Spermatogenesis-associated protein 46 (SPATA46) from Macaca fascicularis (Crab-eating macaque).